The primary structure comprises 605 residues: DNA mismatch repair protein MutL (605 aa).

Belongs to the DNA mismatch repair MutL/HexB family.

Its function is as follows. This protein is involved in the repair of mismatches in DNA. It is required for dam-dependent methyl-directed DNA mismatch repair. May act as a 'molecular matchmaker', a protein that promotes the formation of a stable complex between two or more DNA-binding proteins in an ATP-dependent manner without itself being part of a final effector complex. In Methylocella silvestris (strain DSM 15510 / CIP 108128 / LMG 27833 / NCIMB 13906 / BL2), this protein is DNA mismatch repair protein MutL.